The sequence spans 118 residues: Small ribosomal subunit protein uS13 (118 aa).

The segment at 94–118 (GLPVRGQRTKTNARTRKGPRKPIRK) is disordered.

Belongs to the universal ribosomal protein uS13 family. As to quaternary structure, part of the 30S ribosomal subunit. Forms a loose heterodimer with protein S19. Forms two bridges to the 50S subunit in the 70S ribosome.

Functionally, located at the top of the head of the 30S subunit, it contacts several helices of the 16S rRNA. In the 70S ribosome it contacts the 23S rRNA (bridge B1a) and protein L5 of the 50S subunit (bridge B1b), connecting the 2 subunits; these bridges are implicated in subunit movement. Contacts the tRNAs in the A and P-sites. The protein is Small ribosomal subunit protein uS13 of Marinobacter nauticus (strain ATCC 700491 / DSM 11845 / VT8) (Marinobacter aquaeolei).